Consider the following 141-residue polypeptide: MRAVVQRVSHASVTVDGKVVGAIDEPGLLALVGVTHTDGPAEAAKLARKLWTLRILEDEKSCSDVGAPLLVVSQFTLYGDARKGRRPTWHAAAPGPVAEPLVDQVVEELRALGARVETGVFGARMSVALTNEGPFTVLLEV.

The short motif at 133 to 134 is the Gly-cisPro motif, important for rejection of L-amino acids element; the sequence is GP.

It belongs to the DTD family. Homodimer.

The protein localises to the cytoplasm. It catalyses the reaction glycyl-tRNA(Ala) + H2O = tRNA(Ala) + glycine + H(+). The catalysed reaction is a D-aminoacyl-tRNA + H2O = a tRNA + a D-alpha-amino acid + H(+). Its function is as follows. An aminoacyl-tRNA editing enzyme that deacylates mischarged D-aminoacyl-tRNAs. Also deacylates mischarged glycyl-tRNA(Ala), protecting cells against glycine mischarging by AlaRS. Acts via tRNA-based rather than protein-based catalysis; rejects L-amino acids rather than detecting D-amino acids in the active site. By recycling D-aminoacyl-tRNA to D-amino acids and free tRNA molecules, this enzyme counteracts the toxicity associated with the formation of D-aminoacyl-tRNA entities in vivo and helps enforce protein L-homochirality. The protein is D-aminoacyl-tRNA deacylase of Thermobifida fusca (strain YX).